The chain runs to 371 residues: Monomethylxanthine methyltransferase 2 (371 aa).

Positions 18, 61, 66, 100, 101, 139, 140, and 156 each coordinate S-adenosyl-L-homocysteine. Positions 157, 160, and 161 each coordinate theobromine. Positions 178, 260, 262, and 263 each coordinate Mg(2+). Y355 contacts theobromine.

This sequence belongs to the methyltransferase superfamily. Type-7 methyltransferase family. Mg(2+) serves as cofactor.

It carries out the reaction 7-methylxanthine + S-adenosyl-L-methionine = theobromine + S-adenosyl-L-homocysteine + H(+). Its pathway is alkaloid biosynthesis. Involved in the biosynthesis of caffeine. Catalyzes the conversion of 7-methylxanthine (7mX) to theobromine and with a lower activity of paraxanthine to caffeine. The sequence is that of Monomethylxanthine methyltransferase 2 from Coffea canephora (Robusta coffee).